The primary structure comprises 164 residues: Protein SprT (164 aa).

Residues 13-156 (YQQAEAFFKR…LCRRCREPLV (144 aa)) form the SprT-like domain. His69 contacts Zn(2+). The active site involves Glu70. A Zn(2+)-binding site is contributed by His73.

Belongs to the SprT family. It depends on Zn(2+) as a cofactor.

Its subcellular location is the cytoplasm. This Pseudomonas syringae pv. syringae (strain B728a) protein is Protein SprT.